Reading from the N-terminus, the 144-residue chain is 6,7-dimethyl-8-ribityllumazine synthase (144 aa).

5-amino-6-(D-ribitylamino)uracil-binding positions include Phe-21, 56 to 58 (AYE), and 80 to 82 (AVI). 85–86 (GT) lines the (2S)-2-hydroxy-3-oxobutyl phosphate pocket. The Proton donor role is filled by His-88. Residue Phe-113 participates in 5-amino-6-(D-ribitylamino)uracil binding. Arg-127 contributes to the (2S)-2-hydroxy-3-oxobutyl phosphate binding site.

Belongs to the DMRL synthase family. Forms an icosahedral capsid composed of 60 subunits, arranged as a dodecamer of pentamers.

The catalysed reaction is (2S)-2-hydroxy-3-oxobutyl phosphate + 5-amino-6-(D-ribitylamino)uracil = 6,7-dimethyl-8-(1-D-ribityl)lumazine + phosphate + 2 H2O + H(+). It functions in the pathway cofactor biosynthesis; riboflavin biosynthesis; riboflavin from 2-hydroxy-3-oxobutyl phosphate and 5-amino-6-(D-ribitylamino)uracil: step 1/2. In terms of biological role, catalyzes the formation of 6,7-dimethyl-8-ribityllumazine by condensation of 5-amino-6-(D-ribitylamino)uracil with 3,4-dihydroxy-2-butanone 4-phosphate. This is the penultimate step in the biosynthesis of riboflavin. The protein is 6,7-dimethyl-8-ribityllumazine synthase (ribH) of Photobacterium leiognathi.